The primary structure comprises 194 residues: Adenylate kinase (194 aa).

An ATP-binding site is contributed by 8-16 (GIPGVGKTT).

The protein belongs to the archaeal adenylate kinase family.

The protein localises to the cytoplasm. The enzyme catalyses AMP + ATP = 2 ADP. In Sulfurisphaera tokodaii (strain DSM 16993 / JCM 10545 / NBRC 100140 / 7) (Sulfolobus tokodaii), this protein is Adenylate kinase (adkA).